The primary structure comprises 313 residues: Mas-related G-protein coupled receptor member A4 (313 aa).

The Extracellular segment spans residues 1 to 25 (MAPTTTNPMNETIPGSIDIETLIPN). N10 carries N-linked (GlcNAc...) asparagine glycosylation. A helical membrane pass occupies residues 26–46 (LMIIIFGLVGLTGNVILFWLL). Residues 47 to 54 (GFHLHRNA) lie on the Cytoplasmic side of the membrane. The helical transmembrane segment at 55 to 75 (FLVYILNLALADFLFLLCHII) threads the bilayer. N76 carries N-linked (GlcNAc...) asparagine glycosylation. Residues 76–93 (NSTMLLLKVHLPNNILNH) are Extracellular-facing. Residues 94–114 (CFDIIMTVLYITGLSMLSAIS) form a helical membrane-spanning segment. The Cytoplasmic segment spans residues 115-137 (TERCLSVLCPIWYRCRRPEHTST). Residues 138–158 (VLCAVIWFLPLLICILNGYFC) traverse the membrane as a helical segment. Topologically, residues 159 to 182 (HFFGPKYVIDSVCLATNFFIRTYP) are extracellular. A helical membrane pass occupies residues 183–203 (MFLFIVLCLSTLALLARLFCG). Residues 204-219 (AGKTKFTRLFVTIMLT) lie on the Cytoplasmic side of the membrane. The helical transmembrane segment at 220-240 (VLVFLLCGLPLGFFWFLVPWI) threads the bilayer. Topologically, residues 241 to 255 (NRDFSVLDYILFQTS) are extracellular. A helical transmembrane segment spans residues 256 to 276 (LVLTSVNSCANPIIYFFVGSF). The Cytoplasmic portion of the chain corresponds to 277–313 (RHRLKHKTLKMVLQSALQDTPETPENMVEMSRSKAEP).

This sequence belongs to the G-protein coupled receptor 1 family. Mas subfamily. Expressed in a subset of sensory neurons that includes nociceptors. Expressed in the subclass of non-peptidergic sensory neurons that are IB4(+) and VR1(-).

The protein localises to the cell membrane. Functionally, orphan receptor. May be a receptor for RFamide-family neuropeptides such as NPFF and NPAF, which are analgesic in vivo. May regulate nociceptor function and/or development, including the sensation or modulation of pain. This chain is Mas-related G-protein coupled receptor member A4 (Mrgpra4), found in Mus musculus (Mouse).